The following is a 475-amino-acid chain: Exodeoxyribonuclease I (475 aa).

The 180-residue stretch at 13–192 folds into the Exonuclease domain; sequence FHDYETFGTH…AMADVYATIA (180 aa). Mg(2+) is bound by residues Asp15 and Glu17. The substrate site is built by Glu17 and Arg165. Mg(2+) is bound at residue Asp186. Positions 202–355 constitute an ExoI SH3-like domain; that stretch reads PRLFDYLFTH…KVVAIFAEAE (154 aa). The 118-residue stretch at 358–475 folds into the ExoI C-terminal domain; it reads TPSDNVDAQL…ALWQYAEEIV (118 aa).

Monomer. Interacts with ssb (via C-terminus); this interaction stimulates the exonuclease activity by recruiting the enzyme to its substrate. Mg(2+) serves as cofactor.

It carries out the reaction Exonucleolytic cleavage in the 3'- to 5'-direction to yield nucleoside 5'-phosphates.. Its activity is regulated as follows. Inhibited by 10 mM EDTA. In terms of biological role, degrades single-stranded DNA (ssDNA) in a highly processive manner. Also functions as a DNA deoxyribophosphodiesterase that releases deoxyribose-phosphate moieties following the cleavage of DNA at an apurinic/apyrimidinic (AP) site by either an AP endonuclease or AP lyase. The polypeptide is Exodeoxyribonuclease I (sbcB) (Escherichia coli (strain K12)).